Here is a 244-residue protein sequence, read N- to C-terminus: Phosphoribosylaminoimidazole-succinocarboxamide synthase (244 aa).

Belongs to the SAICAR synthetase family.

It catalyses the reaction 5-amino-1-(5-phospho-D-ribosyl)imidazole-4-carboxylate + L-aspartate + ATP = (2S)-2-[5-amino-1-(5-phospho-beta-D-ribosyl)imidazole-4-carboxamido]succinate + ADP + phosphate + 2 H(+). It functions in the pathway purine metabolism; IMP biosynthesis via de novo pathway; 5-amino-1-(5-phospho-D-ribosyl)imidazole-4-carboxamide from 5-amino-1-(5-phospho-D-ribosyl)imidazole-4-carboxylate: step 1/2. This is Phosphoribosylaminoimidazole-succinocarboxamide synthase from Prochlorococcus marinus (strain SARG / CCMP1375 / SS120).